We begin with the raw amino-acid sequence, 1501 residues long: EF-hand calcium-binding domain-containing protein 6 (1501 aa).

Positions 18 to 47 (RKFTHSRPHSSPCRVYSRNGSPNKFRSSST) are disordered. Residues 35-47 (RNGSPNKFRSSST) are compositionally biased toward polar residues. EF-hand domains follow at residues 70 to 105 (DRGD…FLMP), 172 to 207 (KNIK…FCMK), 297 to 332 (KSYE…FVYQ), 403 to 438 (DHSA…MAVK), 439 to 474 (LSDS…NCRM), 504 to 539 (RNLQ…FCPF), and 634 to 669 (QQDP…TGMP). Positions 699–718 (EDPPMRGPETTPPQPPTPSK) are disordered. EF-hand domains lie at 741 to 776 (ESFR…LLLN), 847 to 882 (NRWS…FDIP), 883 to 918 (LTPR…NYSP), 964 to 999 (DRHQ…CGCS), 1069 to 1104 (SSQL…FCYK), 1176 to 1211 (SHYH…RVQI), and 1212 to 1247 (LTDE…ETAA). Residues aspartate 754, aspartate 756, aspartate 758, and aspartate 765 each contribute to the Ca(2+) site. Threonine 884 is subject to Phosphothreonine. The disordered stretch occupies residues 1246–1307 (AATPMATGDS…TTVIPGTPPL (62 aa)). Composition is skewed to polar residues over residues 1270–1279 (GTRSALSLPT) and 1286–1301 (SKSQ…TTVI). Serine 1290 carries the post-translational modification Phosphoserine. Phosphothreonine is present on residues threonine 1294 and threonine 1304. The tract at residues 1303-1501 (GTPPLQNCDP…YNDFLRAFLQ (199 aa)) is interaction with PARK7. 3 EF-hand domains span residues 1359 to 1394 (ISKE…LLKA), 1434 to 1469 (HCWR…YSIN), and 1470 to 1501 (LSEE…AFLQ). The interval 1407 to 1501 (NAHKMKEAGA…YNDFLRAFLQ (95 aa)) is interaction with AR.

Microtubule inner protein component of sperm flagellar doublet microtubules. Binds PARK7. Part of a ternary complex containing PARK7, EFCAB6/DJBP and AR. In terms of tissue distribution, specifically expressed in the testis.

The protein localises to the nucleus. It is found in the cytoplasm. Its subcellular location is the cytoskeleton. The protein resides in the flagellum axoneme. In terms of biological role, negatively regulates the androgen receptor by recruiting histone deacetylase complex, and protein DJ-1 antagonizes this inhibition by abrogation of this complex. Microtubule inner protein (MIP) part of the dynein-decorated doublet microtubules (DMTs) in cilia axoneme, which is required for motile cilia beating. The polypeptide is EF-hand calcium-binding domain-containing protein 6 (Homo sapiens (Human)).